A 618-amino-acid chain; its full sequence is DNA mismatch repair protein MutL (618 aa).

The segment covering 366 to 381 (AEPTAAREPATPRYSG) has biased composition (low complexity). Residues 366–403 (AEPTAAREPATPRYSGGASGGNGGRQSAGGWPHAQPGY) form a disordered region. Residues 382–392 (GASGGNGGRQS) are compositionally biased toward gly residues.

This sequence belongs to the DNA mismatch repair MutL/HexB family.

This protein is involved in the repair of mismatches in DNA. It is required for dam-dependent methyl-directed DNA mismatch repair. May act as a 'molecular matchmaker', a protein that promotes the formation of a stable complex between two or more DNA-binding proteins in an ATP-dependent manner without itself being part of a final effector complex. This is DNA mismatch repair protein MutL from Salmonella schwarzengrund (strain CVM19633).